Reading from the N-terminus, the 126-residue chain is Large ribosomal subunit protein bL17 (126 aa).

The protein belongs to the bacterial ribosomal protein bL17 family. As to quaternary structure, part of the 50S ribosomal subunit. Contacts protein L32.

This Nitrosococcus oceani (strain ATCC 19707 / BCRC 17464 / JCM 30415 / NCIMB 11848 / C-107) protein is Large ribosomal subunit protein bL17.